A 387-amino-acid polypeptide reads, in one-letter code: MYEPKPEHRFTFGLWTVGNVGRDPFGDAVRERLDPVYVGHKLAELGVHGVNLHDEDLIPRGTPPAERDQIVRRFKRALDETGLKVPMVTGNLFSDPGFKDGGFTSRDPWVRAYAFRKSLETMDLGAELGAEIYVVWPGREGAEVEATGKARKVWDWVREPLNFMAAYAEDQGYGYRFALEPKPNEPRGDIYFATVGSMLALIHTLERPERFGLNPEFAHETMAGLNFVHAVAQALDAGKLLHIDLNGQRMNRFDQDLRFGSENLKAAFLLVDLLESSGYQGPRHFDAHALRTEDEEGVWAFARGCMRTYLILKERAEAFREDPEVKELLAAYYQEDPAALPLMDPYSHEKAEALKRAELPLEAKRHRGYALERLDQLAVEYLLGVRG.

Residues His53 and Asp56 contribute to the active site. Residues Glu180, Glu216, His219, Asp244, Asp254, Asp256, and Asp286 each coordinate Mg(2+).

This sequence belongs to the xylose isomerase family. In terms of assembly, homotetramer. It depends on Mg(2+) as a cofactor.

It localises to the cytoplasm. The catalysed reaction is alpha-D-xylose = alpha-D-xylulofuranose. This is Xylose isomerase (xylA) from Thermus caldophilus.